Consider the following 156-residue polypeptide: Ribosomal RNA large subunit methyltransferase H (156 aa).

S-adenosyl-L-methionine is bound by residues L73, G104, and 123–128; that span reads LSALTL.

Belongs to the RNA methyltransferase RlmH family. Homodimer.

The protein resides in the cytoplasm. The enzyme catalyses pseudouridine(1915) in 23S rRNA + S-adenosyl-L-methionine = N(3)-methylpseudouridine(1915) in 23S rRNA + S-adenosyl-L-homocysteine + H(+). Functionally, specifically methylates the pseudouridine at position 1915 (m3Psi1915) in 23S rRNA. This Shewanella putrefaciens (strain CN-32 / ATCC BAA-453) protein is Ribosomal RNA large subunit methyltransferase H.